The sequence spans 303 residues: Phytochrome-associated serine/threonine-protein phosphatase 3 (303 aa).

Zn(2+) contacts are provided by Asp50, His52, Asp78, and Asn110. The Proton donor role is filled by His111. Zn(2+)-binding residues include His160 and His234.

Belongs to the PPP phosphatase family. PP-6 (PP-V) subfamily. Interacts with PHYA and PHYB, mostly when they are phosphorylated and in Pfr forms. Interacts with TAP46. Interacts with NRP. Interacts with PIN1 and PIN2. Interacts with ABI5. Interacts with PIF3 and PIF4. Protein phosphatase 6 (PP6) holoenzyme is a heterotrimeric complex formed by the catalytic subunit FYPP, a SAPS domain-containing subunit (SAL) and a protein phosphatase 2A regulatory subunit A (PP2AA). It depends on Zn(2+) as a cofactor. Mostly expressed in flowers. Also detected to a lower extent in stems and leaves. Expressed in roots.

It localises to the cytoplasm. It carries out the reaction O-phospho-L-seryl-[protein] + H2O = L-seryl-[protein] + phosphate. It catalyses the reaction O-phospho-L-threonyl-[protein] + H2O = L-threonyl-[protein] + phosphate. Functionally, catalytic subunit of protein phosphatase 6 (PP6). Dephosphorylates phosphorylated phytochromes, with a preference toward Pfr forms. Plays a major role in the photoperiodic control of flowering time in long days by modulating phytochrome signals in flowering time control. Involved in the regulation of polar auxin transport in roots. Dephosphorylates directly the auxin efflux carriers PIN1 and PIN2, thus promoting their proper polar localization in root cell plasma membrane. Acts antagonistically with the protein kinase PID to regulate the reversible phosphorylation of PIN and polar targeting, subsequently impacting polar auxin transport and plant development. Involved in the regulation of abscisic acid (ABA) signaling during seed germination and postgermination seedling growth. Functions as a negative regulator of ABA signaling through direct dephosphorylation and destabilization of ABI5 protein. Acts antagonistically with the protein kinase SRK2E/SNRK2.6 to regulate ABI5 phosphorylation and ABA responses. Involved in the regulation of phosphorylation status in hypocotyl phototropism. Involved in the negative regulation of photomorphogenesis by controlling the stability and transcriptional activity of PIF3 and PIF4 proteins in the dark, via the regulation of their phosphorylation status. The sequence is that of Phytochrome-associated serine/threonine-protein phosphatase 3 from Arabidopsis thaliana (Mouse-ear cress).